A 131-amino-acid polypeptide reads, in one-letter code: MRHGNGLRKLNRTSSHRLAMFRNMAVSLITHEAIKTTLPKAKELRRVIEPLITLGKEPTLANKRLAFARLRDRDAVVKLFAEIGPRFANRNGGYTRVLKMGFRQGDNAPMAYMELVDRPEVDASEADGAAE.

It belongs to the bacterial ribosomal protein bL17 family. As to quaternary structure, part of the 50S ribosomal subunit. Contacts protein L32.

The polypeptide is Large ribosomal subunit protein bL17 (Bordetella avium (strain 197N)).